The primary structure comprises 113 residues: UPF0060 membrane protein CV_3485 (113 aa).

4 helical membrane passes run 12-32 (GLFV…WLVL), 37-57 (SLWL…LLTL), 67-87 (AAYG…VDGV), and 91-111 (RWDA…MLAP).

The protein belongs to the UPF0060 family.

Its subcellular location is the cell inner membrane. The protein is UPF0060 membrane protein CV_3485 of Chromobacterium violaceum (strain ATCC 12472 / DSM 30191 / JCM 1249 / CCUG 213 / NBRC 12614 / NCIMB 9131 / NCTC 9757 / MK).